A 510-amino-acid chain; its full sequence is Glycerol kinase (510 aa).

Residue threonine 12 participates in ADP binding. 3 residues coordinate ATP: threonine 12, threonine 13, and serine 14. Threonine 12 provides a ligand contact to sn-glycerol 3-phosphate. Arginine 16 is a binding site for ADP. 3 residues coordinate sn-glycerol 3-phosphate: arginine 82, glutamate 83, and tyrosine 134. Arginine 82, glutamate 83, and tyrosine 134 together coordinate glycerol. Histidine 230 carries the phosphohistidine; by HPr modification. A sn-glycerol 3-phosphate-binding site is contributed by aspartate 244. Residues aspartate 244 and glutamine 245 each coordinate glycerol. Residues threonine 266 and glycine 309 each coordinate ADP. Residues threonine 266, glycine 309, glutamine 313, and glycine 410 each coordinate ATP. Residues glycine 410 and asparagine 414 each coordinate ADP.

The protein belongs to the FGGY kinase family. In terms of assembly, homotetramer and homodimer (in equilibrium). The phosphoenolpyruvate-dependent sugar phosphotransferase system (PTS), including enzyme I, and histidine-containing protein (HPr) are required for the phosphorylation, which leads to the activation of the enzyme.

The catalysed reaction is glycerol + ATP = sn-glycerol 3-phosphate + ADP + H(+). The protein operates within polyol metabolism; glycerol degradation via glycerol kinase pathway; sn-glycerol 3-phosphate from glycerol: step 1/1. Activated by phosphorylation and inhibited by fructose 1,6-bisphosphate (FBP). Functionally, key enzyme in the regulation of glycerol uptake and metabolism. Catalyzes the phosphorylation of glycerol to yield sn-glycerol 3-phosphate. The sequence is that of Glycerol kinase from Bacillus cereus (strain ATCC 10987 / NRS 248).